A 241-amino-acid polypeptide reads, in one-letter code: MNFPYRNIVVLTGAGISAESGIQTFRAQDGLWENHRIEDVATPEGFARDPDLVQSFYNQRRQKLQDETIKPNAAHLALGRLEAELEGKVTVITQNIDNLHERGGSQNVIHMHGELLKARCSESNQVIEHTEDIKTGELCHCCQIPSQMRPHIVWFGEMRLRMGEIYAALEEADLFVSIGTSGVVYPAAGFVHDAKMHGAHTIEINLEPSAVESEFEEKRYGKASVEVPKLVDEILALDTKA.

Positions 1–237 (MNFPYRNIVV…PKLVDEILAL (237 aa)) constitute a Deacetylase sirtuin-type domain. 13-32 (GAGISAESGIQTFRAQDGLW) contributes to the NAD(+) binding site. Positions 57 and 60 each coordinate substrate. 94–97 (QNID) serves as a coordination point for NAD(+). The active-site Proton acceptor is the His-112. Residues Cys-120 and Cys-139 each contribute to the Zn(2+) site. Residues 179–181 (GTS), 205–207 (NLE), and Ala-223 contribute to the NAD(+) site.

The protein belongs to the sirtuin family. Class III subfamily. In terms of assembly, monomer. The cofactor is Zn(2+).

The protein localises to the cytoplasm. Its subcellular location is the host cytoplasm. The protein resides in the host cytosol. It is found in the host nucleus. It catalyses the reaction N(6)-acetyl-L-lysyl-[protein] + NAD(+) + H2O = 2''-O-acetyl-ADP-D-ribose + nicotinamide + L-lysyl-[protein]. The enzyme catalyses N(6)-succinyl-L-lysyl-[protein] + NAD(+) + H2O = 2''-O-succinyl-ADP-D-ribose + nicotinamide + L-lysyl-[protein]. Functionally, NAD-dependent lysine deacetylase and desuccinylase that specifically removes acetyl and succinyl groups on target proteins. Modulates the activities of several proteins which are inactive in their acylated form. In the intracellular pathogen V.parahaemolyticus, this enzyme regulates host response during infection by induction of host histone deacetylation; it specifically causes deacetylation of histone lysine residues H3K56, H3K9, H3K18 and H4K16 which results in transcriptional repression of several host genes involved in epigenetic regulation, immune response, and autophagy. This chain is NAD-dependent protein deacylase, found in Vibrio parahaemolyticus serotype O3:K6 (strain RIMD 2210633).